Here is a 1039-residue protein sequence, read N- to C-terminus: Integrin alpha-IIb (1039 aa).

The signal sequence occupies residues 1 to 31; that stretch reads MARALCPLQALWLLEWVLLLLGPCAAPPAWA. Residues 32–993 are Extracellular-facing; sequence LNLDPVQLTF…TQLLRALEER (962 aa). FG-GAP repeat units lie at residues 35–96, 110–173, 187–238, 251–305, 306–371, 373–432, and 435–496; these read DPVQ…GGQC, VGSQ…RRAE, VEND…FSSY, SLSF…DSYY, QRLH…PHAL, APSL…GLRS, and SQVL…VQDS. N-linked (GlcNAc...) asparagine glycosylation is present at Asn-46. Disulfide bonds link Cys-87-Cys-96, Cys-138-Cys-161, and Cys-177-Cys-198. Ca(2+)-binding residues include Glu-274, Asp-276, and Asp-278. An N-linked (GlcNAc...) asparagine glycan is attached at Asn-280. Ca(2+) contacts are provided by Thr-281, Glu-283, Asp-328, Asn-330, Asp-332, Arg-334, Asp-336, Asp-396, Asp-398, Asp-400, Tyr-402, Asp-404, Asp-457, Asp-459, Asn-461, Tyr-463, and Asp-465. Cystine bridges form between Cys-504-Cys-515 and Cys-521-Cys-576. An N-linked (GlcNAc...) asparagine glycan is attached at Asn-601. 4 disulfide bridges follow: Cys-633/Cys-639, Cys-705/Cys-718, Cys-857/Cys-921, and Cys-911/Cys-916. A glycan (N-linked (GlcNAc...) asparagine) is linked at Asn-711. The O-linked (GalNAc...) serine; in variant S-874 glycan is linked to Ile-874. Ser-878 carries an O-linked (GalNAc...) serine glycan. The residue at position 891 (Gln-891) is a Pyrrolidone carboxylic acid; in light chain form 1. Asn-962 carries an N-linked (GlcNAc...) asparagine glycan. Residues 994 to 1019 form a helical membrane-spanning segment; sequence AIPIWWVLVGVLGGLLLLTILVLAMW. The Cytoplasmic segment spans residues 1020 to 1039; sequence KVGFFKRNRPPLEEDDEEGE. The short motif at 1022–1026 is the GFFKR motif element; the sequence is GFFKR.

The protein belongs to the integrin alpha chain family. In terms of assembly, heterodimer of an alpha and a beta subunit. The alpha subunit is composed of a heavy and a light chain linked by a disulfide bond. Alpha-IIb associates with beta-3. Directly interacts with RNF181. Interacts (via C-terminus cytoplasmic tail region) with CIB1; the interaction is direct and calcium-dependent. Interacts (via C-terminus cytoplasmic tail region) with CIB2, CIB3 and CIB4; the interactions are stabilized/increased in a calcium and magnesium-dependent manner. ITGA2B:ITGB3 interacts with PPIA/CYPA; the interaction is ROS and PPIase activity-dependent and is increased in the presence of thrombin. ITGA2B:ITGB3 interacts with SELP (via C-type lectin domain); the interaction mediates cell-cell interaction and adhesion. Post-translationally, cleaved by ELANE; the cleavage promotes activation of platelet fibrinogen receptor integrin alpha-IIb/beta-3. As to expression, isoform 1 and isoform 2 are expressed in platelets and megakaryocytes, but not in reticulocytes. Not detected in Jurkat, nor in U937 cell lines. Isoform 3 is expressed in prostate adenocarcinoma, as well as in several erythroleukemia, prostate adenocarcinoma and melanoma cell lines, including PC-3, DU-145, HEL, WM983A, WM983B and WM35. Not detected in platelets, nor in normal prostate (at protein level).

It localises to the membrane. Functionally, integrin alpha-IIb/beta-3 is a receptor for fibronectin, fibrinogen, plasminogen, prothrombin, thrombospondin and vitronectin. It recognizes the sequence R-G-D in a wide array of ligands. It recognizes the sequence H-H-L-G-G-G-A-K-Q-A-G-D-V in fibrinogen gamma chain. Following activation integrin alpha-IIb/beta-3 brings about platelet/platelet interaction through binding of soluble fibrinogen. This step leads to rapid platelet aggregation which physically plugs ruptured endothelial cell surface. The sequence is that of Integrin alpha-IIb (ITGA2B) from Homo sapiens (Human).